The sequence spans 133 residues: Large ribosomal subunit protein eL14 (133 aa).

Belongs to the eukaryotic ribosomal protein eL14 family.

The polypeptide is Large ribosomal subunit protein eL14 (RPL14) (Griffithsia japonica (Red alga)).